Here is a 374-residue protein sequence, read N- to C-terminus: (R)-phenyllactyl-CoA dehydratase beta subunit (374 aa).

This sequence belongs to the FldB/FldC dehydratase alpha/beta subunit family. In terms of assembly, part of the heterotrimeric phenyllactate dehydratase complex FldABC, composed of (R)-phenyllactate CoA-transferase (FldA) and a heterodimeric (R)-phenyllactyl-CoA dehydratase (FldB and FldC). It depends on [4Fe-4S] cluster as a cofactor. Requires No flavin could be detected in the FldABC complex, and the addition of FAD, FMN or riboflavin to the dehydratase do not increase enzymatic activity. as cofactor.

It catalyses the reaction (R)-3-phenyllactoyl-CoA = (E)-cinnamoyl-CoA + H2O. The enzyme catalyses (R)-3-(4-hydroxyphenyl)lactoyl-CoA = (E)-4-coumaroyl-CoA + H2O. It carries out the reaction (R)-3-(indol-3-yl)lactoyl-CoA = (E)-3-(indol-3-yl)acryloyl-CoA + H2O. The protein operates within amino-acid degradation; L-phenylalanine degradation. In terms of biological role, component of the phenyllactate dehydratase complex FldABC that is involved in the fermentation of L-phenylalanine via a Stickland reaction. This complex catalyzes the reversible syn-dehydration of (R)-phenyllactate to (E)-cinnamate in two steps, a CoA-transfer from cinnamoyl-CoA to phenyllactate, catalyzed by FldA, followed by the dehydration of phenyllactyl-CoA to cinnamoyl-CoA, catalyzed by FldB and FldC. Requires the activator FldI to initiate catalysis. In Clostridium sporogenes, this protein is (R)-phenyllactyl-CoA dehydratase beta subunit.